A 202-amino-acid chain; its full sequence is Ras-related protein RIC1 (202 aa).

GTP is bound by residues 15–23 (GDSGVGKSC), 33–40 (YLESYIST), 63–67 (DTAGQ), 121–124 (NKCD), and 151–153 (SAK). An Effector region motif is present at residues 37 to 45 (YISTIGVDF). The segment covering 174-185 (ASQPATNASKPA) has biased composition (polar residues). The disordered stretch occupies residues 174 to 202 (ASQPATNASKPATVQMRGQPVAQQSSCCS). 2 S-geranylgeranyl cysteine lipidation sites follow: cysteine 200 and cysteine 201.

The protein belongs to the small GTPase superfamily. Rab family.

Its subcellular location is the cell membrane. Possesses GTPase activity. In Oryza sativa subsp. japonica (Rice), this protein is Ras-related protein RIC1 (RIC1).